A 61-amino-acid chain; its full sequence is Large ribosomal subunit protein uL30 (61 aa).

The protein belongs to the universal ribosomal protein uL30 family. In terms of assembly, part of the 50S ribosomal subunit.

The chain is Large ribosomal subunit protein uL30 from Clostridioides difficile (strain 630) (Peptoclostridium difficile).